The primary structure comprises 386 residues: Protein phosphatase methylesterase 1 (386 aa).

The interval 1–38 (MSALEKSMHLGRLPSRPPLPGSGGSQSGAKMRMGPGRK) is disordered. Ser15 carries the post-translational modification Phosphoserine. Asymmetric dimethylarginine; alternate is present on Arg16. Arg16 carries the omega-N-methylarginine; alternate modification. Ser42 bears the Phosphoserine mark. Catalysis depends on residues Ser156 and Asp181. A compositionally biased stretch (acidic residues) spans 254–265 (IIEEEEEDEEGS). Positions 254–280 (IIEEEEEDEEGSESISKRKKEDDMETK) are disordered. A compositionally biased stretch (basic and acidic residues) spans 268–280 (ISKRKKEDDMETK). His349 is an active-site residue.

The protein belongs to the AB hydrolase superfamily. Binds PPP2CA and PPP2CB. Post-translationally, phosphorylated by SIK1 following increases in intracellular sodium, leading to dissociation from the protein phosphatase 2A (PP2A) complex and subsequent dephosphorylation of sodium/potassium-transporting ATPase ATP1A1.

The catalysed reaction is [phosphatase 2A protein]-C-terminal L-leucine methyl ester + H2O = [phosphatase 2A protein]-C-terminal L-leucine + methanol + H(+). Demethylates proteins that have been reversibly carboxymethylated. Demethylates PPP2CB (in vitro) and PPP2CA. Binding to PPP2CA displaces the manganese ion and inactivates the enzyme. This is Protein phosphatase methylesterase 1 (PPME1) from Homo sapiens (Human).